Here is a 346-residue protein sequence, read N- to C-terminus: Syntaxin UFE1 (346 aa).

Residues 1-324 (MMSDLTPIFR…RKAKRAAGRT (324 aa)) lie on the Cytoplasmic side of the membrane. Residues 255-317 (LNQKNEQLKK…KKGNKELRKA (63 aa)) form the t-SNARE coiled-coil homology domain. The chain crosses the membrane as a helical; Anchor for type IV membrane protein span at residues 325–342 (AKMTTYGAIIMGVFILFL). Over 343–346 (DYVG) the chain is Lumenal.

This sequence belongs to the syntaxin family. In terms of assembly, component of a SNARE complex consisting of UFE1, USE1, SEC20 and SEC22 or YKT6.

The protein resides in the endoplasmic reticulum membrane. Syntaxin required for targeting and fusion of Golgi-derived retrograde transport vesicles with the ER. This is Syntaxin UFE1 (UFE1) from Saccharomyces cerevisiae (strain ATCC 204508 / S288c) (Baker's yeast).